The chain runs to 681 residues: Terpene synthase 6, chloroplastic (681 aa).

The Mg(2+) site is built by Asp433, Asp437, Asn577, and Glu585. Residues Asp433–Asp437 carry the DDXXD motif motif.

The protein belongs to the terpene synthase family. The cofactor is Mg(2+). Expressed in leaves.

Its subcellular location is the plastid. The protein resides in the chloroplast. It participates in secondary metabolite biosynthesis; terpenoid biosynthesis. Functionally, may be involved in the biosynthesis of ent-kaurene diterpenoids natural products such as oridonin, miltiradiene, eriocalyxin B and nezukol, known to exhibit antitumor, anti-inflammatory and antibacterial activities. The sequence is that of Terpene synthase 6, chloroplastic from Isodon rubescens (Rabdosia rubescens).